The sequence spans 500 residues: MTNIWLLSLIFVICILVAVFNHKNRRNYQRTPPSPPGCPIIGNLHQLGELPHQSLWKLSKKYGPVMLLKLGRVPTVIVSSSETAKQALKIHDLHCCSRPGFAGARELSYNYLDIAFSPYDDYWKEVRKLAVQELFSSKQVHSIQPIKDEEVKKLIDSISESAAQKTPINLNKTLLALTVSVVCRTAFSVNFEGTVLNSERFNNIVREALEMLGSFSASDFIPYVGRIIDLLTGLQGRRERSMRDLDAFYEQMFDLHKQKKEEGSEDFVDLLLRLEKEEAVLGNDKLTRNHIKAILMDVLLAGMDTSAITMTWAMAELAKNPRVMKKVQSEIRSQIKNKERISFDDTDKLEYLKMVIKETWRLHPTTPLLIPREAMSEFEINGYTIPVKTRLHVNVWAIGRDPDTWKDPEVFLPERFTDNNIDAKGQHFELLPFGGGRRMCPAVYMGTTMVEFGLANLLYHFDWKLPEGMKVDDIDMEEAPGLTVNKKNELILVPTKFLDP.

Residues 1–21 (MTNIWLLSLIFVICILVAVFN) form a helical membrane-spanning segment. Heme is bound at residue cysteine 440.

Belongs to the cytochrome P450 family. Heme serves as cofactor.

Its subcellular location is the membrane. This Arabidopsis thaliana (Mouse-ear cress) protein is Cytochrome P450 71B34 (CYP71B34).